Reading from the N-terminus, the 95-residue chain is Co-chaperonin GroES (95 aa).

It belongs to the GroES chaperonin family. In terms of assembly, heptamer of 7 subunits arranged in a ring. Interacts with the chaperonin GroEL.

It is found in the cytoplasm. Together with the chaperonin GroEL, plays an essential role in assisting protein folding. The GroEL-GroES system forms a nano-cage that allows encapsulation of the non-native substrate proteins and provides a physical environment optimized to promote and accelerate protein folding. GroES binds to the apical surface of the GroEL ring, thereby capping the opening of the GroEL channel. This chain is Co-chaperonin GroES, found in Cereibacter sphaeroides (strain ATCC 17025 / ATH 2.4.3) (Rhodobacter sphaeroides).